Consider the following 406-residue polypeptide: LIM/homeobox protein Lhx1 (406 aa).

2 consecutive LIM zinc-binding domains span residues 4–54 (CAGC…CKND) and 63–117 (CAGC…CKED). Over residues 125 to 136 (AKENSLHSATTG) the composition is skewed to polar residues. Disordered regions lie at residues 125-187 (AKEN…RTTI) and 296-372 (FPQG…SAEV). The span at 137–148 (SDPSLSPDSQDP) shows a compositional bias: low complexity. A compositionally biased stretch (basic and acidic residues) spans 151–167 (DDAKDSESANVSDKETG). Positions 180–239 (RRGPRTTIKAKQLETLKAAFAATPKPTRHIREQLAQETGLNMRVIQVWFQNRRSKERRMK) form a DNA-binding region, homeobox.

The protein resides in the nucleus. Transcriptional factor that defines subclasses of motoneurons that segregate into columns in the spinal cord and select distinct axon pathways. Acts in conjunction with ISL-2. The polypeptide is LIM/homeobox protein Lhx1 (LHX1) (Gallus gallus (Chicken)).